A 489-amino-acid chain; its full sequence is Probable apyrase 1 (489 aa).

Residues 1 to 28 lie on the Cytoplasmic side of the membrane; that stretch reads MRRFSAAAGARQQQQQGEAVSDRVLRFR. The chain crosses the membrane as a helical; Signal-anchor for type II membrane protein span at residues 29 to 49; it reads GVLVVVLAPVLLISLVLLLMP. Residues 50-489 lie on the Extracellular side of the membrane; the sequence is RAPASATVEG…GSAIEVASSS (440 aa). 89–99 is a binding site for ATP; the sequence is VIFDAGSSGSR. E211 functions as the Proton acceptor in the catalytic mechanism. 235–245 lines the ATP pocket; the sequence is GVVDLGGGSVQ.

Belongs to the GDA1/CD39 NTPase family. Ca(2+) is required as a cofactor.

It localises to the membrane. It catalyses the reaction a ribonucleoside 5'-triphosphate + 2 H2O = a ribonucleoside 5'-phosphate + 2 phosphate + 2 H(+). Functionally, catalyzes the hydrolysis of phosphoanhydride bonds of nucleoside tri- and di-phosphates. The protein is Probable apyrase 1 (APY1) of Oryza sativa subsp. japonica (Rice).